The sequence spans 257 residues: AN1-type zinc finger protein 2B (257 aa).

AN1-type zinc fingers lie at residues 4 to 52 (PDLG…QKDI) and 94 to 142 (KIFT…HPTS). Positions 10, 15, 25, 28, 33, 36, 42, 44, 100, 105, 115, 118, 123, 126, 132, and 134 each coordinate Zn(2+). Residues 141-151 (TSRAGLAAISR) form a VCP/p97-interacting motif (VIM) region. The disordered stretch occupies residues 153–187 (QGLASTSTVPSPSRTLPSSSSPSRATPQLPPRTTS). Positions 156 to 179 (ASTSTVPSPSRTLPSSSSPSRATP) are enriched in low complexity. S163, S173, and S187 each carry phosphoserine. 2 consecutive UIM domains span residues 197-216 (SEDE…AKPQ) and 221-240 (QEEE…AEYQ). Residue C254 is modified to Cysteine methyl ester. C254 is lipidated: S-geranylgeranyl cysteine. The CAAX motif motif lies at 254–257 (CSLC). A propeptide spans 255–257 (SLC) (removed in mature form).

As to quaternary structure, binds 'Lys-48'-linked polyubiquitin chains of ubiquitinated proteins. Associates with the proteasome complex; upon exposure to arsenite. Interacts (via VIM motif) with VCP; the interaction is direct. Interacts with BAG6. Interacts with IGF1R (nascent precursor form). Interacts with DERL1, FAF2, NPLOC4 and UFD1; probably through VCP. In terms of processing, phosphorylated by MAPK14. Phosphorylation has no effect on association with the proteasome complex.

It is found in the endoplasmic reticulum membrane. Plays a role in protein homeostasis by regulating both the translocation and the ubiquitin-mediated proteasomal degradation of nascent proteins at the endoplasmic reticulum. It is involved in the regulation of signal-mediated translocation of proteins into the endoplasmic reticulum. It also plays a role in the ubiquitin-mediated proteasomal degradation of proteins for which signal-mediated translocation to the endoplasmic reticulum has failed. May therefore function in the endoplasmic reticulum stress-induced pre-emptive quality control, a mechanism that selectively attenuates the translocation of newly synthesized proteins into the endoplasmic reticulum and reroutes them to the cytosol for proteasomal degradation. By controlling the steady-state expression of the IGF1R receptor, indirectly regulates the insulin-like growth factor receptor signaling pathway. The polypeptide is AN1-type zinc finger protein 2B (Rattus norvegicus (Rat)).